We begin with the raw amino-acid sequence, 492 residues long: Solute carrier family 2, facilitated glucose transporter member 1 (492 aa).

Residue Met1 is modified to N-acetylmethionine. The Cytoplasmic portion of the chain corresponds to 1–11 (MEPSSKKLTGR). Residues 12–33 (LMLAVGGAVLGSLQFGYNTGVI) traverse the membrane as a helical segment. Over 34-66 (NAPQKVIEEFYNQTWVHRYGESILPTTLTTLWS) the chain is Extracellular. A glycan (N-linked (GlcNAc...) asparagine) is linked at Asn45. The chain crosses the membrane as a helical span at residues 67–87 (LSVAIFSVGGMIGSFSVGLFV). The Cytoplasmic segment spans residues 88-90 (NRF). A helical membrane pass occupies residues 91–112 (GRRNSMLMMNLLAFVSAVLMGF). Topologically, residues 113-120 (SKLGKSFE) are extracellular. A helical membrane pass occupies residues 121-144 (MLILGRFIIGVYCGLTTGFVPMYV). Residue Thr137 coordinates cytochalasin B. At 145 to 155 (GEVSPTALRGA) the chain is on the cytoplasmic side. The helical transmembrane segment at 156 to 176 (LGTLHQLGIVVGILIAQVFGL) threads the bilayer. Over 177–185 (DSIMGNKDL) the chain is Extracellular. The chain crosses the membrane as a helical span at residues 186 to 206 (WPLLLSIIFIPALLQCIVLPF). The Cytoplasmic portion of the chain corresponds to 207–271 (CPESPRFLLI…LFRSPAYRQP (65 aa)). At Ser226 the chain carries Phosphoserine; by PKC/PRKCB. A helical membrane pass occupies residues 272–293 (ILIAVVLQLSQQLSGINAVFYY). Gln282 is a binding site for cytochalasin B. Residues 282-283 (QQ) and Asn288 contribute to the D-glucose site. Residues 294–306 (STSIFEKAGVQQP) are Extracellular-facing. The helical transmembrane segment at 307-328 (VYATIGSGIVNTAFTVVSLFVV) threads the bilayer. Asn317 serves as a coordination point for D-glucose. At 329 to 334 (ERAGRR) the chain is on the cytoplasmic side. A helical membrane pass occupies residues 335 to 355 (TLHLIGLAGMAGCAILMTIAL). Topologically, residues 356–365 (ALLEQLPWMS) are extracellular. The helical transmembrane segment at 366–388 (YLSIVAIFGFVAFFEVGPGPIPW) threads the bilayer. Glu380 contributes to the D-glucose binding site. Trp388 contacts cytochalasin B. Topologically, residues 389-401 (FIVAELFSQGPRP) are cytoplasmic. A helical transmembrane segment spans residues 402–422 (AAIAVAGFSNWTSNFIVGMCF). Asn411 contacts cytochalasin B. Topologically, residues 423–429 (QYVEQLC) are extracellular. Residues 430-450 (GPYVFIIFTVLLVLFFIFTYF) form a helical membrane-spanning segment. The Cytoplasmic segment spans residues 451 to 492 (KVPETKGRTFDEIASGFRQGGASQSDKTPEELFHPLGADSQV). Phosphoserine is present on Ser465. The disordered stretch occupies residues 468 to 492 (RQGGASQSDKTPEELFHPLGADSQV). Thr478 is subject to Phosphothreonine. Ser490 is modified (phosphoserine).

Belongs to the major facilitator superfamily. Sugar transporter (TC 2.A.1.1) family. Glucose transporter subfamily. Interacts with GIPC (via PDZ domain). Found in a complex with ADD2, DMTN and SLC2A1. Interacts (via C-terminus cytoplasmic region) with DMTN isoform 2. Interacts with SNX27; the interaction is required when endocytosed to prevent degradation in lysosomes and promote recycling to the plasma membrane. Interacts with STOM. Interacts with SGTA (via Gln-rich region). Interacts with isoform 1 of BSG. In terms of processing, phosphorylation at Ser-226 by PKC promotes glucose uptake by increasing cell membrane localization. In terms of tissue distribution, detected in erythrocytes (at protein level). Expressed at variable levels in many human tissues.

The protein localises to the cell membrane. It is found in the melanosome. The protein resides in the photoreceptor inner segment. The catalysed reaction is D-glucose(out) = D-glucose(in). The protein operates within carbohydrate degradation. With respect to regulation, the uptake of glucose is inhibited by cytochalasin B and Phe-amide core-scaffold inhibitors GLUT-i1 and GLUT-i2. These inhibitors bind in the central cavity of the inward-open state and overlap the glucose-binding site. Glucose uptake is increased in response to phorbol ester 12-O-tetradecanoylphorbol-13-acetate (TPA) treatment: TPA-induced glucose uptake requires phosphorylation at Ser-226. Interacts with SMIM43; the interaction may promote SLC2A1-mediated glucose transport to meet the energy needs of mesendoderm differentiation. Functionally, facilitative glucose transporter, which is responsible for constitutive or basal glucose uptake. Has a very broad substrate specificity; can transport a wide range of aldoses including both pentoses and hexoses. Most important energy carrier of the brain: present at the blood-brain barrier and assures the energy-independent, facilitative transport of glucose into the brain. In association with BSG and NXNL1, promotes retinal cone survival by increasing glucose uptake into photoreceptors. Required for mesendoderm differentiation. This is Solute carrier family 2, facilitated glucose transporter member 1 from Homo sapiens (Human).